Reading from the N-terminus, the 124-residue chain is Small ribosomal subunit protein bS6 (124 aa).

Residues 96–124 (ETAPSPMMKEVQREEARKAAQTTTEGQPA) form a disordered region. The span at 115 to 124 (AQTTTEGQPA) shows a compositional bias: polar residues.

It belongs to the bacterial ribosomal protein bS6 family.

Binds together with bS18 to 16S ribosomal RNA. The sequence is that of Small ribosomal subunit protein bS6 from Cupriavidus metallidurans (strain ATCC 43123 / DSM 2839 / NBRC 102507 / CH34) (Ralstonia metallidurans).